Here is a 257-residue protein sequence, read N- to C-terminus: Small ribosomal subunit protein uS15m (257 aa).

A mitochondrion-targeting transit peptide spans 1 to 57 (MLRAAWRALSSVRVQAVTQAPVPALRARSSASLPSARCGLQTPSLLNAARAYAVQKP). The interval 228–257 (KAAAAAAKKEKRERVPENPSNALPEKTKEN) is disordered. Positions 234–243 (AKKEKRERVP) are enriched in basic and acidic residues.

Belongs to the universal ribosomal protein uS15 family. In terms of assembly, component of the mitochondrial ribosome small subunit (28S) which comprises a 12S rRNA and about 30 distinct proteins. Interacts with METTL17.

The protein resides in the mitochondrion matrix. This Rattus norvegicus (Rat) protein is Small ribosomal subunit protein uS15m (Mrps15).